The chain runs to 382 residues: Alanine racemase (382 aa).

Residue Lys-39 is the Proton acceptor; specific for D-alanine of the active site. Lys-39 carries the N6-(pyridoxal phosphate)lysine modification. Arg-138 contacts substrate. The active-site Proton acceptor; specific for L-alanine is Tyr-265. Residue Met-312 coordinates substrate.

This sequence belongs to the alanine racemase family. Requires pyridoxal 5'-phosphate as cofactor.

It carries out the reaction L-alanine = D-alanine. It participates in amino-acid biosynthesis; D-alanine biosynthesis; D-alanine from L-alanine: step 1/1. Functionally, catalyzes the interconversion of L-alanine and D-alanine. May also act on other amino acids. This Staphylococcus saprophyticus subsp. saprophyticus (strain ATCC 15305 / DSM 20229 / NCIMB 8711 / NCTC 7292 / S-41) protein is Alanine racemase (alr).